The primary structure comprises 483 residues: Scarecrow-like protein 26 (483 aa).

In terms of domain architecture, GRAS spans 95–477 (KTDESKGLRL…RRLVSASFWA (383 aa)). Residues 102–165 (LRLVHLLVAA…SKLLERDSVL (64 aa)) are leucine repeat I (LRI). Residues 184 to 251 (FELLQNMSPY…PSAQHLRITA (68 aa)) form a VHIID region. The VHIID signature appears at 215-219 (IHIVD). The leucine repeat II (LRII) stretch occupies residues 267–299 (ETGRRLTAFADSIGQPFSYQHCKLDTNAFSTSS). Residues 308–400 (VVINCMLHLP…RVFIGPWVAN (93 aa)) form a PFYRE region. An SAW region spans residues 403–477 (TRITANDAEV…RRLVSASFWA (75 aa)).

The protein belongs to the GRAS family. Expressed in seedlings, roots, leaves and flowers.

The protein localises to the nucleus. Its function is as follows. Probable transcription factor involved in plant development. In Arabidopsis thaliana (Mouse-ear cress), this protein is Scarecrow-like protein 26 (SCL26).